Reading from the N-terminus, the 393-residue chain is ATP phosphoribosyltransferase regulatory subunit (393 aa).

This sequence belongs to the class-II aminoacyl-tRNA synthetase family. HisZ subfamily. In terms of assembly, heteromultimer composed of HisG and HisZ subunits.

It is found in the cytoplasm. The protein operates within amino-acid biosynthesis; L-histidine biosynthesis; L-histidine from 5-phospho-alpha-D-ribose 1-diphosphate: step 1/9. Its function is as follows. Required for the first step of histidine biosynthesis. May allow the feedback regulation of ATP phosphoribosyltransferase activity by histidine. This is ATP phosphoribosyltransferase regulatory subunit from Marinobacter nauticus (strain ATCC 700491 / DSM 11845 / VT8) (Marinobacter aquaeolei).